Reading from the N-terminus, the 727-residue chain is Bromodomain-containing protein C631.02 (727 aa).

Disordered stretches follow at residues 27–231 (AATI…PPMT) and 341–369 (TSYS…AAMY). Positions 56–68 (ENDDGTLDLFGDS) are enriched in acidic residues. Residues 69-78 (ELEKEQKGDN) are compositionally biased toward basic and acidic residues. Residues 102-114 (PSSPTHPSVSNIT) show a composition bias toward polar residues. Residues 128–150 (EEEKSSESLDSHTHPPKRVRNED) are compositionally biased toward basic and acidic residues. A compositionally biased stretch (polar residues) spans 153–177 (LTFSKTSPVSPSSLKDGASNTVTND). A Phosphoserine modification is found at Ser162. A compositionally biased stretch (basic and acidic residues) spans 206–231 (SKEHSSPHDETVKKEENDKDQYPPMT). The Bromo 1 domain occupies 229–335 (PMTKEQHKYI…ATFERQLKQL (107 aa)). Residues 388-497 (RKDAAEMKFC…SIFQKLWANK (110 aa)) enclose the Bromo 2 domain. The region spanning 570-650 (RSLSVDIYPP…KGDEIGAEAL (81 aa)) is the NET domain. The segment at 699–727 (IAAYNTKSLGSDDSSSEDDGESSESSDSA) is disordered. Positions 712 to 727 (SSSEDDGESSESSDSA) are enriched in acidic residues.

The protein belongs to the BET family.

It is found in the nucleus. The sequence is that of Bromodomain-containing protein C631.02 from Schizosaccharomyces pombe (strain 972 / ATCC 24843) (Fission yeast).